A 123-amino-acid chain; its full sequence is Small ribosomal subunit protein uS13c (123 aa).

Positions 90 to 123 are disordered; it reads GKRHRNSLPVRGQRTRTNARSRRGAKKTVTGKKK. A compositionally biased stretch (basic residues) spans 102 to 123; it reads QRTRTNARSRRGAKKTVTGKKK.

It belongs to the universal ribosomal protein uS13 family. In terms of assembly, part of the 30S ribosomal subunit.

Its subcellular location is the plastid. The protein resides in the chloroplast. Located at the top of the head of the 30S subunit, it contacts several helices of the 16S rRNA. This chain is Small ribosomal subunit protein uS13c, found in Thalassiosira pseudonana (Marine diatom).